The chain runs to 517 residues: GMP synthase [glutamine-hydrolyzing] (517 aa).

The 191-residue stretch at 9 to 199 (RILILDFGSQ…VLNVCGCEGL (191 aa)) folds into the Glutamine amidotransferase type-1 domain. Cys86 (nucleophile) is an active-site residue. Catalysis depends on residues His173 and Glu175. Positions 200 to 392 (WTSASIIEDA…LGLPYNMLYR (193 aa)) constitute a GMPS ATP-PPase domain. Residue 227–233 (SGGVDSS) coordinates ATP.

In terms of assembly, homodimer.

It carries out the reaction XMP + L-glutamine + ATP + H2O = GMP + L-glutamate + AMP + diphosphate + 2 H(+). It participates in purine metabolism; GMP biosynthesis; GMP from XMP (L-Gln route): step 1/1. Functionally, catalyzes the synthesis of GMP from XMP. This Aliivibrio fischeri (strain MJ11) (Vibrio fischeri) protein is GMP synthase [glutamine-hydrolyzing].